Here is a 740-residue protein sequence, read N- to C-terminus: MSIEYVQLQLASPSEIKRWSQRILPTGEVVGEISKADTINYRTFKPERGGLFCERIFGSTSNGECSCGKTKRRKLIVPVNFNRLTLQKRNAELEATQAIIEVCPSCGVEPTNSKVRRYRMGCISLKKPVAHMWYFRNSPNVLAALLNMRSQEIDETIHFQTYTPSKYGTQNYCLHGGVQWYVNHWEPMHPYFAGDIDVSMDKAASWNSKSTFMPSQIKTIENCGGEALQELLTRLDLVFLQRMLSRKLKNTIEKKKLAAKSLRKRHKRRKTAKLLGRTDQKNYGITIKVREYSRRLEFIRSLARKGLRPEWMILSIFPVLPPDLRPMIQMSSGRFATSDLNDLYRRLIYRKIRFEKFLTLFDEEFLPDLLIRHDLCLLQEAADSIIDNGRLDKPAQRPNRKPFKSLTSIIEGKHGRFRQNLLGKRVDYSGRSVIVVGPKLRLHQCGLPREMALELFQPFVIRALLEESGVKNIRAAKNLLQRRSQMVWDILDTVVLGHPVLLNRAPTLHRLGIQAFEPILLSGRAIQLHPLVCPAFNADFDGDQMAVHVPLGLEAQAEARLLMLATHNWLSPATGEPSILPSQDMILGFYYLTTLKPTVSLKRPVEQPMAVRGRNLIQSNSIFNNFESVLHAYETSKVDLHEIIWLRWSSYIQTTNSEPLQITVNKTGHVTTVYDSFVMQSGATNGPDNSMLSVQMKSRDTSSISKVYNCLTSLNAAAFYILTTPGRVLFNNLIYENLFL.

Residues cysteine 65, cysteine 67, cysteine 103, and cysteine 106 each contribute to the Zn(2+) site. Residues aspartate 539, aspartate 541, and aspartate 543 each contribute to the Mg(2+) site.

The protein belongs to the RNA polymerase beta' chain family. RpoC1 subfamily. In terms of assembly, in plastids the minimal PEP RNA polymerase catalytic core is composed of four subunits: alpha, beta, beta', and beta''. When a (nuclear-encoded) sigma factor is associated with the core the holoenzyme is formed, which can initiate transcription. Mg(2+) serves as cofactor. Requires Zn(2+) as cofactor.

The protein localises to the plastid. Its subcellular location is the chloroplast. It carries out the reaction RNA(n) + a ribonucleoside 5'-triphosphate = RNA(n+1) + diphosphate. Its function is as follows. DNA-dependent RNA polymerase catalyzes the transcription of DNA into RNA using the four ribonucleoside triphosphates as substrates. The sequence is that of DNA-directed RNA polymerase subunit beta' from Ostreococcus tauri.